The primary structure comprises 43 residues: Cytochrome b559 subunit beta (43 aa).

Residues 18-34 traverse the membrane as a helical segment; the sequence is WLAVHTLAIPTVFFLGA. His-22 is a binding site for heme.

It belongs to the PsbE/PsbF family. Heterodimer of an alpha subunit and a beta subunit. PSII is composed of 1 copy each of membrane proteins PsbA, PsbB, PsbC, PsbD, PsbE, PsbF, PsbH, PsbI, PsbJ, PsbK, PsbL, PsbM, PsbT, PsbX, PsbY, PsbZ, Psb30/Ycf12, peripheral proteins PsbO, CyanoQ (PsbQ), PsbU, PsbV and a large number of cofactors. It forms dimeric complexes. Requires heme b as cofactor.

The protein resides in the cellular thylakoid membrane. This b-type cytochrome is tightly associated with the reaction center of photosystem II (PSII). PSII is a light-driven water:plastoquinone oxidoreductase that uses light energy to abstract electrons from H(2)O, generating O(2) and a proton gradient subsequently used for ATP formation. It consists of a core antenna complex that captures photons, and an electron transfer chain that converts photonic excitation into a charge separation. The sequence is that of Cytochrome b559 subunit beta from Synechococcus sp. (strain JA-2-3B'a(2-13)) (Cyanobacteria bacterium Yellowstone B-Prime).